The chain runs to 349 residues: Alanine racemase (349 aa).

K35 serves as the catalytic Proton acceptor; specific for D-alanine. The residue at position 35 (K35) is an N6-(pyridoxal phosphate)lysine. R130 contributes to the substrate binding site. Residue Y244 is the Proton acceptor; specific for L-alanine of the active site. M292 contributes to the substrate binding site.

It belongs to the alanine racemase family. The cofactor is pyridoxal 5'-phosphate.

It catalyses the reaction L-alanine = D-alanine. Its pathway is amino-acid biosynthesis; D-alanine biosynthesis; D-alanine from L-alanine: step 1/1. In terms of biological role, catalyzes the interconversion of L-alanine and D-alanine. May also act on other amino acids. This is Alanine racemase (alr) from Cereibacter sphaeroides (strain KD131 / KCTC 12085) (Rhodobacter sphaeroides).